The chain runs to 253 residues: 3-deoxy-manno-octulosonate cytidylyltransferase (253 aa).

This sequence belongs to the KdsB family.

The protein localises to the cytoplasm. It carries out the reaction 3-deoxy-alpha-D-manno-oct-2-ulosonate + CTP = CMP-3-deoxy-beta-D-manno-octulosonate + diphosphate. The protein operates within nucleotide-sugar biosynthesis; CMP-3-deoxy-D-manno-octulosonate biosynthesis; CMP-3-deoxy-D-manno-octulosonate from 3-deoxy-D-manno-octulosonate and CTP: step 1/1. It participates in bacterial outer membrane biogenesis; lipopolysaccharide biosynthesis. Functionally, activates KDO (a required 8-carbon sugar) for incorporation into bacterial lipopolysaccharide in Gram-negative bacteria. This is 3-deoxy-manno-octulosonate cytidylyltransferase from Acinetobacter baumannii (strain SDF).